The primary structure comprises 122 residues: UPF0102 protein CKL_1410 (122 aa).

Belongs to the UPF0102 family.

The sequence is that of UPF0102 protein CKL_1410 from Clostridium kluyveri (strain ATCC 8527 / DSM 555 / NBRC 12016 / NCIMB 10680 / K1).